The chain runs to 237 residues: Probable transcriptional regulatory protein PSHAa1370 (237 aa).

It belongs to the TACO1 family.

It localises to the cytoplasm. This is Probable transcriptional regulatory protein PSHAa1370 from Pseudoalteromonas translucida (strain TAC 125).